Consider the following 39-residue polypeptide: MKVRPSVKKMCDACRVIKRNGRTMIICSANPKHKQRAGK.

Belongs to the bacterial ribosomal protein bL36 family.

The chain is Large ribosomal subunit protein bL36 from Leuconostoc mesenteroides subsp. mesenteroides (strain ATCC 8293 / DSM 20343 / BCRC 11652 / CCM 1803 / JCM 6124 / NCDO 523 / NBRC 100496 / NCIMB 8023 / NCTC 12954 / NRRL B-1118 / 37Y).